Here is a 126-residue protein sequence, read N- to C-terminus: MSAYRQPVERYWWARRRSYLRFMLREISCIFVAWFVLYLVLVLRAVGAGGNSYQRFLDFSANPVVVVLNVVALSFLLLHAVTWFGSAPRAMVIQVRGRRVPARAVLAGHYAAWLVVSVIVAWMVLS.

The next 3 helical transmembrane spans lie at isoleucine 30–glycine 50, valine 64–phenylalanine 84, and valine 105–leucine 125.

This sequence belongs to the FrdC family. As to quaternary structure, part of an enzyme complex containing four subunits: a flavoprotein (FrdA), an iron-sulfur protein (FrdB), and two hydrophobic anchor proteins (FrdC and FrdD).

It localises to the cell membrane. Functionally, anchors the catalytic components of the fumarate reductase complex to the cell membrane, binds quinones. In Mycobacterium tuberculosis (strain CDC 1551 / Oshkosh), this protein is Fumarate reductase subunit C.